The following is a 36-amino-acid chain: uncharacterized protein (36 aa).

It localises to the mitochondrion. This is an uncharacterized protein from Saccharomyces cerevisiae (strain ATCC 204508 / S288c) (Baker's yeast).